The sequence spans 75 residues: Small, acid-soluble spore protein Tlp (75 aa).

This sequence belongs to the Tlp family.

It localises to the spore core. The sequence is that of Small, acid-soluble spore protein Tlp from Geobacillus thermodenitrificans (strain NG80-2).